Reading from the N-terminus, the 517-residue chain is MSLGPELATKEQIREIAADYGLPMTDEEVADHIELLKGAIASYRELEHIPERKLPVKYPRTPGWRPTTQENPLNGWYWRCEIEGAKEGPLKGDRIAIKDVVCVAGVPMMNGSKLLEGYVPEIDATIVTRMLDAGATIVGKSACEDFSFSAGGMTCSTGPVGNPYDPTRNPGASSNGSAVLISTGQVDLAIGGDQGGSIRLPSAWCGVYGLKPTYGLVPYTGCAMIEGTLDHVGPMASSPKGIAKLLSVIAGYDADDPRQQGRIVPGFDTNYLPALERGVKGMKIAILKEGFGHDGSDGMLASDPLVDDCVRSAMETFRGLGAEVAEVSIPEHLTAWHIWTAIGLEGFTAFGVNGNGVGTNWNGWYNTSMAEYLARAMKSRPYDMPATVRSVLIRGEYFRRYYHNRYYGKAQNQRHLINEAYDRVLSEYDIIVCPTIPGLPTKMVDRDAGTLDTVVNQLNQLRNTAVCDLTGHPSMSVPCGLREGLPVGMMLTAKHFDDATLIAAAAAFEAAGDWRKM.

Active-site charge relay system residues include lysine 98 and serine 173. The active-site Acyl-ester intermediate is the serine 197.

The protein belongs to the amidase family. As to quaternary structure, homooctamer.

The enzyme catalyses urethane + H2O + H(+) = ethanol + NH4(+) + CO2. Its activity is regulated as follows. Exhibits poor salt tolerance but excellent tolerance to low concentrations of ethanol. EDTA has almost no impact on activity. Activity is increased in the presence of Ca(2+), Mg(2+) and Co(3+) and inhibited in the presence of Al(3+), Zn(2+) and Cu(2+). Its function is as follows. Hydrolase that can catalyze the degradation of ethyl carbamate (also called urethane), a probable human carcinogen widely found in alcoholic beverages. Can also use methyl carbamate, butyl carbamate, acetamide and urea. Also catalyzes the enantioselective hydrolysis of 2-phenylpropionamide, alpha-chlorophenylacetamide, 2-methyl-3-phenylpropionamide and alpha-methoxyphenylacetamide to the corresponding acids. Is inactive on benzamide and L-glutamine. This chain is Urethanase, found in Rhizobium radiobacter (Agrobacterium tumefaciens).